Reading from the N-terminus, the 257-residue chain is Pyridoxine 5'-phosphate synthase (257 aa).

Position 6 (asparagine 6) interacts with 3-amino-2-oxopropyl phosphate. 8 to 9 lines the 1-deoxy-D-xylulose 5-phosphate pocket; that stretch reads DH. Arginine 17 contributes to the 3-amino-2-oxopropyl phosphate binding site. Histidine 41 acts as the Proton acceptor in catalysis. Residues arginine 43 and histidine 48 each contribute to the 1-deoxy-D-xylulose 5-phosphate site. The Proton acceptor role is filled by glutamate 68. A 1-deoxy-D-xylulose 5-phosphate-binding site is contributed by threonine 98. The active-site Proton donor is histidine 210. Residues glycine 211 and 232–233 contribute to the 3-amino-2-oxopropyl phosphate site; that span reads GQ.

The protein belongs to the PNP synthase family. As to quaternary structure, homooctamer; tetramer of dimers.

The protein resides in the cytoplasm. It carries out the reaction 3-amino-2-oxopropyl phosphate + 1-deoxy-D-xylulose 5-phosphate = pyridoxine 5'-phosphate + phosphate + 2 H2O + H(+). It participates in cofactor biosynthesis; pyridoxine 5'-phosphate biosynthesis; pyridoxine 5'-phosphate from D-erythrose 4-phosphate: step 5/5. Functionally, catalyzes the complicated ring closure reaction between the two acyclic compounds 1-deoxy-D-xylulose-5-phosphate (DXP) and 3-amino-2-oxopropyl phosphate (1-amino-acetone-3-phosphate or AAP) to form pyridoxine 5'-phosphate (PNP) and inorganic phosphate. The sequence is that of Pyridoxine 5'-phosphate synthase from Campylobacter jejuni subsp. jejuni serotype O:2 (strain ATCC 700819 / NCTC 11168).